A 204-amino-acid chain; its full sequence is UPF0637 protein lin1053 (204 aa).

Belongs to the UPF0637 family.

The polypeptide is UPF0637 protein lin1053 (Listeria innocua serovar 6a (strain ATCC BAA-680 / CLIP 11262)).